A 367-amino-acid chain; its full sequence is MSESQTLVVKLGTSVLTGGSRRLNRAHIVELVRQCAQLHAMGHRIVIVTSGAIAAGREHLGYPELPATIASKQLLAAVGQSRLIQLWEQLFSIYGIHVGQMLLTRADMEDRERFLNARDTLRALLDNSIVPVINENDAVATAEIKVGDNDNLSALAAILAGADKLLLLTDQPGLFTADPRSNPQAELIKDVYGIDDALRAIAGDSVSGLGTGGMGTKLQAADVACRAGIDTIIAAGNRPDVIGHAMEGLPVGTCFHAQESPLENRKRWIFGAPPAGELTVDAGATQAILERGSSLLPKGIKIVSGNFSRGEVIRIRNSEGRDIAHGVSRYNSDALRLIAGQHSQQIDAILGYEYGPVAVHRDDMIIR.

Lys-10 lines the ATP pocket. 3 residues coordinate substrate: Ser-50, Asp-137, and Asn-149. ATP contacts are provided by residues Thr-169–Asp-170 and Thr-211–Lys-217. The 79-residue stretch at Ala-275–Glu-353 folds into the PUA domain.

Belongs to the glutamate 5-kinase family.

The protein localises to the cytoplasm. It catalyses the reaction L-glutamate + ATP = L-glutamyl 5-phosphate + ADP. It participates in amino-acid biosynthesis; L-proline biosynthesis; L-glutamate 5-semialdehyde from L-glutamate: step 1/2. In terms of biological role, catalyzes the transfer of a phosphate group to glutamate to form L-glutamate 5-phosphate. The chain is Glutamate 5-kinase from Klebsiella pneumoniae (strain 342).